A 327-amino-acid chain; its full sequence is Guanine nucleotide-binding protein subunit beta-like protein 1 (327 aa).

7 WD repeats span residues 16–54 (LRGT…IWSL), 58–97 (RAVT…LWDL), 103–145 (AVVD…ILEM), 153–195 (ALKP…LWDV), 200–237 (VCSR…VWSL), 242–282 (ALQV…VFHW), and 286–323 (QPLA…LWSL).

In terms of tissue distribution, ubiquitous. Highly expressed in heart, liver, skeletal muscle, kidney, spleen, thymus and pancreas. Detected at low levels in lung, placenta and brain.

The protein resides in the cytoplasm. It localises to the nucleus. Functionally, acts as a critical regulator of DNA damage response (DDR) signaling via specifically regulating phosphatidylinositol 3-kinase-related protein kinase (PIKK) family proteins. The sequence is that of Guanine nucleotide-binding protein subunit beta-like protein 1 from Homo sapiens (Human).